The sequence spans 702 residues: Polyribonucleotide nucleotidyltransferase 1 (702 aa).

2 residues coordinate Mg(2+): aspartate 483 and aspartate 489. Residues 550-609 (PQVTKLKVHPDKVREVIGAGGKVINKIIDETGVKINIENDGTIYIAAPDQESARVALEMI) form the KH domain. The 69-residue stretch at 619 to 687 (GEVYTGKVIK…PQGKIGLSRK (69 aa)) folds into the S1 motif domain.

Belongs to the polyribonucleotide nucleotidyltransferase family. Mg(2+) is required as a cofactor.

It is found in the cytoplasm. It carries out the reaction RNA(n+1) + phosphate = RNA(n) + a ribonucleoside 5'-diphosphate. In terms of biological role, involved in mRNA degradation. Catalyzes the phosphorolysis of single-stranded polyribonucleotides processively in the 3'- to 5'-direction. This is Polyribonucleotide nucleotidyltransferase 1 from Alkaliphilus metalliredigens (strain QYMF).